A 215-amino-acid polypeptide reads, in one-letter code: Cytochrome b6 (215 aa).

The chain crosses the membrane as a helical span at residues 32–52; the sequence is IFYCLGGITLTCFLVQVATGF. Cysteine 35 is a heme c binding site. Heme b contacts are provided by histidine 86 and histidine 100. A run of 3 helical transmembrane segments spans residues 90-110, 116-136, and 186-206; these read ASMMVLMMILHVFRVYLTGGF, LTWVTGVVLAVLTASFGVTGY, and LHTFVLPLLTAVFMLMHFPMI. Heme b contacts are provided by histidine 187 and histidine 202.

Belongs to the cytochrome b family. PetB subfamily. As to quaternary structure, the 4 large subunits of the cytochrome b6-f complex are cytochrome b6, subunit IV (17 kDa polypeptide, PetD), cytochrome f and the Rieske protein, while the 4 small subunits are PetG, PetL, PetM and PetN. The complex functions as a dimer. Heme b serves as cofactor. It depends on heme c as a cofactor.

Its subcellular location is the plastid. The protein resides in the chloroplast thylakoid membrane. Its function is as follows. Component of the cytochrome b6-f complex, which mediates electron transfer between photosystem II (PSII) and photosystem I (PSI), cyclic electron flow around PSI, and state transitions. This Helianthus annuus (Common sunflower) protein is Cytochrome b6.